We begin with the raw amino-acid sequence, 224 residues long: Oxalate oxidase GF-2.8 (224 aa).

Residues 1 to 23 form the signal peptide; it reads MGYSKTLVAGLFAMLLLAPAVLA. C33 and C49 are disulfide-bonded. Residues 63–214 enclose the Cupin type-1 domain; the sequence is SKLAKAGNTS…ALRVEARVVE (152 aa). N-linked (GlcNAc...) asparagine glycans are attached at residues N70 and N75. Positions 111, 113, 118, and 160 each coordinate Mn(2+).

This sequence belongs to the germin family. As to quaternary structure, oligomer (believed to be a pentamer but probably hexamer).

The protein localises to the secreted. Its subcellular location is the extracellular space. It localises to the apoplast. The protein resides in the cytoplasm. It is found in the cell wall. The catalysed reaction is oxalate + O2 + 2 H(+) = H2O2 + 2 CO2. In terms of biological role, produces developmental and stress-related release of hydrogen peroxide in the apoplast. May play an important role in several aspects of plant growth and defense mechanisms. This chain is Oxalate oxidase GF-2.8, found in Triticum aestivum (Wheat).